Here is a 430-residue protein sequence, read N- to C-terminus: Asparagine--tRNA ligase (430 aa).

It belongs to the class-II aminoacyl-tRNA synthetase family. As to quaternary structure, homodimer.

Its subcellular location is the cytoplasm. It carries out the reaction tRNA(Asn) + L-asparagine + ATP = L-asparaginyl-tRNA(Asn) + AMP + diphosphate + H(+). The sequence is that of Asparagine--tRNA ligase from Geobacillus thermodenitrificans (strain NG80-2).